The chain runs to 1641 residues: Alpha-2-macroglobulin (1641 aa).

Positions 1-31 (MRDRVAMMLRPLVRGWIPRAVLLLTVAFSFG) are cleaved as a signal peptide. Cysteine 32 carries the N-palmitoyl cysteine lipid modification. A lipid anchor (S-diacylglycerol cysteine) is attached at cysteine 32. The segment at residues 1166 to 1169 (CAEQ) is a cross-link (isoglutamyl cysteine thioester (Cys-Gln)).

It belongs to the protease inhibitor I39 (alpha-2-macroglobulin) family. Bacterial alpha-2-macroglobulin subfamily.

Its subcellular location is the cell membrane. Functionally, protects the bacterial cell from host peptidases. The protein is Alpha-2-macroglobulin of Xylella fastidiosa (strain Temecula1 / ATCC 700964).